The chain runs to 299 residues: MLDKARLRIAMQKSGRLSDDSRALLARCGIKINLNQQRLIAYAENMPIDILRVRDDDIPGLVMDGVVDLGIIGENVLEEELLKRRAQGENPSYITLRRLDFGACRLSLAAPVDFDYQGVECLNNTRIATSYPNLLKRYLDQKGITFKSCLLNGSVEVAPRAGLADSICDLVSTGATLEANGLKEVEVIYRSKACLIQRDGEMDATKQALIDRLMTRIQGVIQARESKYIMLHAPSDCLEDVIALLPGAERPTILPLAGDQNRVAMHMVSSETLFWETMEKLKALGASSILVLPIEKMME.

The protein belongs to the ATP phosphoribosyltransferase family. Long subfamily. In terms of assembly, equilibrium between an active dimeric form, an inactive hexameric form and higher aggregates. Interconversion between the various forms is largely reversible and is influenced by the natural substrates and inhibitors of the enzyme. Mg(2+) is required as a cofactor.

The protein resides in the cytoplasm. It catalyses the reaction 1-(5-phospho-beta-D-ribosyl)-ATP + diphosphate = 5-phospho-alpha-D-ribose 1-diphosphate + ATP. It participates in amino-acid biosynthesis; L-histidine biosynthesis; L-histidine from 5-phospho-alpha-D-ribose 1-diphosphate: step 1/9. Feedback inhibited by histidine. Catalyzes the condensation of ATP and 5-phosphoribose 1-diphosphate to form N'-(5'-phosphoribosyl)-ATP (PR-ATP). Has a crucial role in the pathway because the rate of histidine biosynthesis seems to be controlled primarily by regulation of HisG enzymatic activity. The chain is ATP phosphoribosyltransferase from Proteus mirabilis (strain HI4320).